A 70-amino-acid chain; its full sequence is DNA-directed RNA polymerase subunit epsilon (70 aa).

The protein belongs to the RNA polymerase subunit epsilon family. As to quaternary structure, RNAP is composed of a core of 2 alpha, a beta and a beta' subunit. The core is associated with a delta subunit, and at least one of epsilon or omega. When a sigma factor is associated with the core the holoenzyme is formed, which can initiate transcription.

The catalysed reaction is RNA(n) + a ribonucleoside 5'-triphosphate = RNA(n+1) + diphosphate. Functionally, a non-essential component of RNA polymerase (RNAP). The sequence is that of DNA-directed RNA polymerase subunit epsilon from Leuconostoc mesenteroides subsp. mesenteroides (strain ATCC 8293 / DSM 20343 / BCRC 11652 / CCM 1803 / JCM 6124 / NCDO 523 / NBRC 100496 / NCIMB 8023 / NCTC 12954 / NRRL B-1118 / 37Y).